The sequence spans 222 residues: Probable mitochondrial import inner membrane translocase subunit Tim17 3 (222 aa).

Helical transmembrane passes span 16–36, 60–80, and 115–135; these read CGCA…LKGF, SIAG…CALV, and ALVG…VATI.

Belongs to the Tim17/Tim22/Tim23 family. Component of the TIM23 complex at least composed of Tim23, Tim17 (Tim17a1, Tim17a2 or Tim17b1) and a Tim50. The complex interacts with the Tim44 component of the PAM complex.

It localises to the mitochondrion inner membrane. Essential component of the TIM23 complex, a complex that mediates the translocation of transit peptide-containing proteins across the mitochondrial inner membrane. In Drosophila melanogaster (Fruit fly), this protein is Probable mitochondrial import inner membrane translocase subunit Tim17 3 (Tim17a1).